A 483-amino-acid polypeptide reads, in one-letter code: Altronate oxidoreductase (483 aa).

18-29 serves as a coordination point for NAD(+); that stretch reads IIQFGEGNFLRA.

This sequence belongs to the mannitol dehydrogenase family. UxaB subfamily.

It carries out the reaction D-altronate + NAD(+) = keto-D-tagaturonate + NADH + H(+). Its pathway is carbohydrate metabolism; pentose and glucuronate interconversion. In Yersinia pestis, this protein is Altronate oxidoreductase.